The following is a 224-amino-acid chain: 7-cyano-7-deazaguanine synthase (224 aa).

9–19 (ISGGMDSTLCA) contacts ATP. Positions 190, 198, 201, and 204 each coordinate Zn(2+).

The protein belongs to the QueC family. The cofactor is Zn(2+).

It catalyses the reaction 7-carboxy-7-deazaguanine + NH4(+) + ATP = 7-cyano-7-deazaguanine + ADP + phosphate + H2O + H(+). It functions in the pathway purine metabolism; 7-cyano-7-deazaguanine biosynthesis. Its function is as follows. Catalyzes the ATP-dependent conversion of 7-carboxy-7-deazaguanine (CDG) to 7-cyano-7-deazaguanine (preQ(0)). This is 7-cyano-7-deazaguanine synthase from Campylobacter jejuni subsp. jejuni serotype O:6 (strain 81116 / NCTC 11828).